Reading from the N-terminus, the 537-residue chain is Ribonuclease III domain-containing protein RNC1, chloroplastic (537 aa).

A chloroplast-targeting transit peptide spans 1-51 (MELCSSSPSSSLLRICSSSAPEISFSSSISQFPSKTQSILTKSRFQNLRIC). RNase III domains follow at residues 141–283 (LLEV…LCFG) and 415–515 (EHPR…TIYG).

In terms of assembly, interacts with RNA. Part of large ribonucleo-protein particles that contain CAF1 and/or CAF2.

It localises to the plastid. The protein localises to the chloroplast. Binds specific group II introns in chloroplasts and facilitates their splicing. Acts on both subgroup IIA and subgroup IIB introns. The substrates of the subgroup II also require the CRM domain proteins CAF1 or CAF2. Binds both single-stranded and double-stranded RNA non-specifically, but lacks endonuclease activity. Required for plastid ribosome biogenesis. The sequence is that of Ribonuclease III domain-containing protein RNC1, chloroplastic from Arabidopsis thaliana (Mouse-ear cress).